Reading from the N-terminus, the 203-residue chain is N-(5'-phosphoribosyl)anthranilate isomerase (203 aa).

The protein belongs to the TrpF family.

The catalysed reaction is N-(5-phospho-beta-D-ribosyl)anthranilate = 1-(2-carboxyphenylamino)-1-deoxy-D-ribulose 5-phosphate. It functions in the pathway amino-acid biosynthesis; L-tryptophan biosynthesis; L-tryptophan from chorismate: step 3/5. This Sulfurihydrogenibium sp. (strain YO3AOP1) protein is N-(5'-phosphoribosyl)anthranilate isomerase.